The primary structure comprises 297 residues: Bifunctional protein FolD (297 aa).

NADP(+)-binding positions include G164–S166, S193, and I234.

This sequence belongs to the tetrahydrofolate dehydrogenase/cyclohydrolase family. As to quaternary structure, homodimer.

The catalysed reaction is (6R)-5,10-methylene-5,6,7,8-tetrahydrofolate + NADP(+) = (6R)-5,10-methenyltetrahydrofolate + NADPH. It carries out the reaction (6R)-5,10-methenyltetrahydrofolate + H2O = (6R)-10-formyltetrahydrofolate + H(+). The protein operates within one-carbon metabolism; tetrahydrofolate interconversion. Catalyzes the oxidation of 5,10-methylenetetrahydrofolate to 5,10-methenyltetrahydrofolate and then the hydrolysis of 5,10-methenyltetrahydrofolate to 10-formyltetrahydrofolate. The polypeptide is Bifunctional protein FolD (Halobacterium salinarum (strain ATCC 700922 / JCM 11081 / NRC-1) (Halobacterium halobium)).